We begin with the raw amino-acid sequence, 203 residues long: Large ribosomal subunit protein bL25 (203 aa).

Belongs to the bacterial ribosomal protein bL25 family. CTC subfamily. Part of the 50S ribosomal subunit; part of the 5S rRNA/L5/L18/L25 subcomplex. Contacts the 5S rRNA. Binds to the 5S rRNA independently of L5 and L18.

Its function is as follows. This is one of the proteins that binds to the 5S RNA in the ribosome where it forms part of the central protuberance. The chain is Large ribosomal subunit protein bL25 from Cellvibrio japonicus (strain Ueda107) (Pseudomonas fluorescens subsp. cellulosa).